The following is a 361-amino-acid chain: Single-stranded DNA-binding protein 3 (361 aa).

Met-1 is modified (N-acetylmethionine). A LisH domain is found at 16–48 (AREKLALYVYEYLLHVGAQKSAQTFLSEIRWEK). 3 positions are modified to asymmetric dimethylarginine: Arg-128, Arg-134, and Arg-138. 2 disordered regions span residues 140–166 (GNQP…QQGH) and 184–361 (PMGP…TMSV). Low complexity predominate over residues 223-241 (PNSANSIPYSSSSPGTYVG). The segment covering 245–255 (GGGPPGTPIMP) has biased composition (pro residues). Polar residues predominate over residues 258-269 (ADSTNSSDNIYT). The segment covering 288 to 298 (GSDGPMGGMGG) has biased composition (gly residues). Over residues 319–330 (NSPNNISGISNP) the composition is skewed to low complexity. Phosphoserine is present on residues Ser-320, Ser-325, and Ser-328. Thr-333 is modified (phosphothreonine). The segment covering 346-361 (HSFQNDNYSPSMTMSV) has biased composition (polar residues). 2 positions are modified to phosphoserine: Ser-354 and Ser-360.

The protein resides in the nucleus. In terms of biological role, may be involved in transcription regulation of the alpha 2(I) collagen gene where it binds to the single-stranded polypyrimidine sequences in the promoter region. This Rattus norvegicus (Rat) protein is Single-stranded DNA-binding protein 3 (Ssbp3).